The chain runs to 217 residues: N-(5'-phosphoribosyl)anthranilate isomerase (217 aa).

It belongs to the TrpF family.

The catalysed reaction is N-(5-phospho-beta-D-ribosyl)anthranilate = 1-(2-carboxyphenylamino)-1-deoxy-D-ribulose 5-phosphate. It participates in amino-acid biosynthesis; L-tryptophan biosynthesis; L-tryptophan from chorismate: step 3/5. In Chlorobium luteolum (strain DSM 273 / BCRC 81028 / 2530) (Pelodictyon luteolum), this protein is N-(5'-phosphoribosyl)anthranilate isomerase.